Here is a 276-residue protein sequence, read N- to C-terminus: Undecaprenyl-diphosphatase (276 aa).

7 helical membrane-spanning segments follow: residues 48–68, 92–112, 119–139, 155–175, 196–216, 229–249, and 255–275; these read AANSFKVVIQLGSILAVAIVF, LTIAQIAVGLVPAAVLGFLFE, LFSVRTVAYGLIAGAVLMLIA, ITYKQAFCVGLFQCLALWPGF, ADFTFIMAIPIMAGASLLKLV, FFLVGFICAFVVALLVVKFFL, and IKLVPFAIYRVILGIILIMLV.

It belongs to the UppP family.

The protein localises to the cell membrane. The enzyme catalyses di-trans,octa-cis-undecaprenyl diphosphate + H2O = di-trans,octa-cis-undecaprenyl phosphate + phosphate + H(+). Catalyzes the dephosphorylation of undecaprenyl diphosphate (UPP). Confers resistance to bacitracin. The chain is Undecaprenyl-diphosphatase from Bacillus velezensis (strain DSM 23117 / BGSC 10A6 / LMG 26770 / FZB42) (Bacillus amyloliquefaciens subsp. plantarum).